The following is a 255-amino-acid chain: Cyclic di-GMP phosphodiesterase PdeH (255 aa).

The EAL domain occupies 13–255 (EASIESLQER…ETLNTAVLAL (243 aa)).

It catalyses the reaction 3',3'-c-di-GMP + H2O = 5'-phosphoguanylyl(3'-&gt;5')guanosine + H(+). In terms of biological role, involved in the control of the switch from cell motility to adhesion via regulation of cellular levels of cyclic-di-GMP (c-di-GMP). Part of a signaling cascade that regulates curli biosynthesis. The cascade is composed of two c-di-GMP control modules, in which c-di-GMP controlled by the DgcE/PdeH pair (module I) regulates the activity of the DgcM/PdeR pair (module II), which in turn regulates activity of the transcription factor MlrA and expression of the master biofilm regulator csgD. Effect on flagella is controlled via the c-di-GMP-binding flagellar brake protein YcgR. The chain is Cyclic di-GMP phosphodiesterase PdeH from Escherichia coli (strain K12).